The sequence spans 453 residues: UDP-N-acetylmuramoylalanine--D-glutamate ligase (453 aa).

117–123 (GTNGKTT) contacts ATP.

This sequence belongs to the MurCDEF family.

The protein localises to the cytoplasm. It catalyses the reaction UDP-N-acetyl-alpha-D-muramoyl-L-alanine + D-glutamate + ATP = UDP-N-acetyl-alpha-D-muramoyl-L-alanyl-D-glutamate + ADP + phosphate + H(+). The protein operates within cell wall biogenesis; peptidoglycan biosynthesis. Its function is as follows. Cell wall formation. Catalyzes the addition of glutamate to the nucleotide precursor UDP-N-acetylmuramoyl-L-alanine (UMA). The polypeptide is UDP-N-acetylmuramoylalanine--D-glutamate ligase (Caldicellulosiruptor saccharolyticus (strain ATCC 43494 / DSM 8903 / Tp8T 6331)).